The sequence spans 360 residues: UDP-N-acetylglucosamine--N-acetylmuramyl-(pentapeptide) pyrophosphoryl-undecaprenol N-acetylglucosamine transferase (360 aa).

UDP-N-acetyl-alpha-D-glucosamine is bound by residues 11-13, Asn117, Arg160, Ser192, and Gln294; that span reads TGG.

The protein belongs to the glycosyltransferase 28 family. MurG subfamily.

It localises to the cell inner membrane. The enzyme catalyses di-trans,octa-cis-undecaprenyl diphospho-N-acetyl-alpha-D-muramoyl-L-alanyl-D-glutamyl-meso-2,6-diaminopimeloyl-D-alanyl-D-alanine + UDP-N-acetyl-alpha-D-glucosamine = di-trans,octa-cis-undecaprenyl diphospho-[N-acetyl-alpha-D-glucosaminyl-(1-&gt;4)]-N-acetyl-alpha-D-muramoyl-L-alanyl-D-glutamyl-meso-2,6-diaminopimeloyl-D-alanyl-D-alanine + UDP + H(+). It participates in cell wall biogenesis; peptidoglycan biosynthesis. Cell wall formation. Catalyzes the transfer of a GlcNAc subunit on undecaprenyl-pyrophosphoryl-MurNAc-pentapeptide (lipid intermediate I) to form undecaprenyl-pyrophosphoryl-MurNAc-(pentapeptide)GlcNAc (lipid intermediate II). This is UDP-N-acetylglucosamine--N-acetylmuramyl-(pentapeptide) pyrophosphoryl-undecaprenol N-acetylglucosamine transferase from Rickettsia felis (strain ATCC VR-1525 / URRWXCal2) (Rickettsia azadi).